The primary structure comprises 520 residues: Trichothecene O-acetyltransferase TRI3 (520 aa).

The tract at residues 1–23 (MGSKLPELPKLSPEKHRWEKSNV) is disordered. A compositionally biased stretch (basic and acidic residues) spans 12–23 (SPEKHRWEKSNV).

This sequence belongs to the trichothecene O-acetyltransferase family.

Its pathway is sesquiterpene biosynthesis; trichothecene biosynthesis. Its function is as follows. Trichothecene O-acetyltransferase; part of the gene cluster that mediates the production of the antimicrobial trichothecene harzianum A (HA) that plays a role in Botrytis cinerea antagonistic activity and plant defense priming. The biosynthesis of harzianum A begins with the cyclization of farnesyl diphosphate to trichodiene and is catalyzed by the trichodiene synthase TRI5. Trichodiene undergoes a series of oxygenations catalyzed by the cytochrome P450 monooxygenase TRI4. TRI4 controls the addition of 3 oxygens at C-2, C-11, and the C-12, C-13-epoxide to form the intermediate isotrichodiol. Isotrichodiol then undergoes a non-enzymatic isomerization and cyclization to form 12,13-epoxytrichothec-9-ene (EPT) which is further converted to trichodermol by the cytochrome P450 monooxygenase TRI11 via C-4 hydroxylation. The last step of HA synthesis is esterification of an octatriendioyl moiety to the C-4 oxygen of trichodermol. The octatriendioyl moiety is probably produced by the polyketide synthase TRI17 and the esterification performed by the trichothecene O-acetyltransferase TRI3. The chain is Trichothecene O-acetyltransferase TRI3 from Trichoderma arundinaceum.